Reading from the N-terminus, the 98-residue chain is NADH-ubiquinone oxidoreductase chain 4L (98 aa).

Transmembrane regions (helical) follow at residues 1-21 (MSLV…GLLM), 29-49 (SLLC…LIIL), and 61-81 (IILL…LVMV).

Belongs to the complex I subunit 4L family. As to quaternary structure, core subunit of respiratory chain NADH dehydrogenase (Complex I) which is composed of 45 different subunits.

It is found in the mitochondrion inner membrane. The catalysed reaction is a ubiquinone + NADH + 5 H(+)(in) = a ubiquinol + NAD(+) + 4 H(+)(out). Core subunit of the mitochondrial membrane respiratory chain NADH dehydrogenase (Complex I) which catalyzes electron transfer from NADH through the respiratory chain, using ubiquinone as an electron acceptor. Part of the enzyme membrane arm which is embedded in the lipid bilayer and involved in proton translocation. This Hippopotamus amphibius (Hippopotamus) protein is NADH-ubiquinone oxidoreductase chain 4L (MT-ND4L).